Consider the following 298-residue polypeptide: Probable endonuclease 4 (298 aa).

Histidine 69, histidine 111, glutamate 146, aspartate 180, histidine 183, histidine 215, aspartate 228, histidine 230, and glutamate 260 together coordinate Zn(2+).

The protein belongs to the AP endonuclease 2 family. Zn(2+) serves as cofactor.

The catalysed reaction is Endonucleolytic cleavage to 5'-phosphooligonucleotide end-products.. Functionally, endonuclease IV plays a role in DNA repair. It cleaves phosphodiester bonds at apurinic or apyrimidinic (AP) sites, generating a 3'-hydroxyl group and a 5'-terminal sugar phosphate. This Bacillus anthracis (strain A0248) protein is Probable endonuclease 4.